Here is a 206-residue protein sequence, read N- to C-terminus: Protein Nef (206 aa).

G2 is lipidated: N-myristoyl glycine; by host. S6 is modified (phosphoserine; by host). An acidic; interacts with host PACS1 and PACS2; stabilizes the interaction of NEF/MHC-I with host AP1M1; necessary for MHC-I internalization region spans residues E62–E65. The tract at residues P69 to P78 is SH3-binding; interaction with Src family tyrosine kinases. The short motif at P72–P75 is the PxxP; stabilizes the interaction of NEF/MHC-I with host AP1M1; necessary for MHC-I internalization element. The mediates dimerization, Nef-PTE1 interaction stretch occupies residues D108–W124. Residues V148 to V180 form a binding to ATP6V1H region. The Dileucine internalization motif; necessary for CD4 internalization motif lies at L164–L165. The Diacidic; necessary for CD4 internalization motif lies at D174 to D175.

It belongs to the lentivirus primate group Nef protein family. As to quaternary structure, monomer; cytosolic form. Homodimer; membrane bound form. Interacts with Nef associated p21-activated kinase (PAK2); this interaction activates PAK2. Associates with the Nef-MHC-I-AP1 complex; this complex is required for MHC-I internalization. Interacts (via C-terminus) with host PI3-kinase. Interacts with host PACS1; this interaction seems to be weak. Interacts with host PACS2. Interacts with host LCK and MAPK3; these interactions inhibit the kinase activity of the latter. Interacts with host ATP6V1H; this interaction may play a role in CD4 endocytosis. Associates with the CD4-Nef-AP2 complex; this complex is required for CD4 internalization. Interacts with host AP2 subunit alpha and AP2 subunit sigma2. Interacts with TCR-zeta chain; this interaction up-regulates the Fas ligand (FasL) surface expression. Interacts with host HCK, LYN, and SRC; these interactions activate the Src family kinases. Interacts with MAP3K5; this interaction inhibits the Fas and TNFR-mediated death signals. Interacts with beta-COP and PTE1. Interacts with human RACK1; this increases Nef phosphorylation by PKC. Interacts with TP53; this interaction decreases the half-life of TP53, protecting the infected cell against p53-mediated apoptosis. Post-translationally, the virion-associated Nef proteins are cleaved by the viral protease to release the soluble C-terminal core protein. Nef is probably cleaved concomitantly with viral structural proteins on maturation of virus particles. Myristoylated. In terms of processing, phosphorylated on serine residues, probably by host PKCdelta and theta.

The protein localises to the host cell membrane. The protein resides in the virion. Its subcellular location is the secreted. It is found in the host Golgi apparatus membrane. Factor of infectivity and pathogenicity, required for optimal virus replication. Alters numerous pathways of T-lymphocyte function and down-regulates immunity surface molecules in order to evade host defense and increase viral infectivity. Alters the functionality of other immunity cells, like dendritic cells, monocytes/macrophages and NK cells. Its function is as follows. In infected CD4(+) T-lymphocytes, down-regulates the surface MHC-I, mature MHC-II, CD4, CD28, CCR5 and CXCR4 molecules. Mediates internalization and degradation of host CD4 through the interaction of with the cytoplasmic tail of CD4, the recruitment of AP-2 (clathrin adapter protein complex 2), internalization through clathrin coated pits, and subsequent transport to endosomes and lysosomes for degradation. Diverts host MHC-I molecules to the trans-Golgi network-associated endosomal compartments by an endocytic pathway to finally target them for degradation. MHC-I down-regulation may involve AP-1 (clathrin adapter protein complex 1) or possibly Src family kinase-ZAP70/Syk-PI3K cascade recruited by PACS2. In consequence infected cells are masked for immune recognition by cytotoxic T-lymphocytes. Decreasing the number of immune receptors also prevents reinfection by more HIV particles (superinfection). Down-regulates host SERINC3 and SERINC5 thereby excluding these proteins from the viral particles. Virion infectivity is drastically higher when SERINC3 or SERINC5 are excluded from the viral envelope, because these host antiviral proteins impair the membrane fusion event necessary for subsequent virion penetration. In terms of biological role, bypasses host T-cell signaling by inducing a transcriptional program nearly identical to that of anti-CD3 cell activation. Interaction with TCR-zeta chain up-regulates the Fas ligand (FasL). Increasing surface FasL molecules and decreasing surface MHC-I molecules on infected CD4(+) cells send attacking cytotoxic CD8+ T-lymphocytes into apoptosis. Functionally, plays a role in optimizing the host cell environment for viral replication without causing cell death by apoptosis. Protects the infected cells from apoptosis in order to keep them alive until the next virus generation is ready to strike. Inhibits the Fas and TNFR-mediated death signals by blocking MAP3K5/ASK1. Decreases the half-life of TP53, protecting the infected cell against p53-mediated apoptosis. Inhibits the apoptotic signals regulated by the Bcl-2 family proteins through the formation of a Nef/PI3-kinase/PAK2 complex that leads to activation of PAK2 and induces phosphorylation of host BAD. Extracellular Nef protein targets CD4(+) T-lymphocytes for apoptosis by interacting with CXCR4 surface receptors. The protein is Protein Nef of Human immunodeficiency virus type 1 group M subtype B (isolate LW123) (HIV-1).